Reading from the N-terminus, the 304-residue chain is Ribonuclease Z (304 aa).

H63, H65, D67, H68, H141, D208, and H266 together coordinate Zn(2+). The active-site Proton acceptor is D67.

Belongs to the RNase Z family. As to quaternary structure, homodimer. Requires Zn(2+) as cofactor.

It catalyses the reaction Endonucleolytic cleavage of RNA, removing extra 3' nucleotides from tRNA precursor, generating 3' termini of tRNAs. A 3'-hydroxy group is left at the tRNA terminus and a 5'-phosphoryl group is left at the trailer molecule.. In terms of biological role, zinc phosphodiesterase, which displays some tRNA 3'-processing endonuclease activity. Probably involved in tRNA maturation, by removing a 3'-trailer from precursor tRNA. This chain is Ribonuclease Z, found in Chlamydia trachomatis serovar D (strain ATCC VR-885 / DSM 19411 / UW-3/Cx).